Reading from the N-terminus, the 141-residue chain is Large ribosomal subunit protein uL14 (141 aa).

This sequence belongs to the universal ribosomal protein uL14 family. In terms of assembly, part of the 50S ribosomal subunit. Forms a cluster with proteins L3 and L24e, part of which may contact the 16S rRNA in 2 intersubunit bridges.

Its function is as follows. Binds to 23S rRNA. Forms part of two intersubunit bridges in the 70S ribosome. The polypeptide is Large ribosomal subunit protein uL14 (Pyrococcus horikoshii (strain ATCC 700860 / DSM 12428 / JCM 9974 / NBRC 100139 / OT-3)).